A 50-amino-acid polypeptide reads, in one-letter code: MLLPATMSDKPDMAEIEKFDKSKLKKTETQEKNPLPSKETIEQEKQAGES.

Residues 1–50 form a disordered region; the sequence is MLLPATMSDKPDMAEIEKFDKSKLKKTETQEKNPLPSKETIEQEKQAGES. A Phosphoserine modification is found at serine 8. Residues 9–31 show a composition bias toward basic and acidic residues; that stretch reads DKPDMAEIEKFDKSKLKKTETQE. Lysine 10 carries the N6-acetyllysine modification. The residue at position 18 (lysine 18) is an N6-acetyllysine; alternate. A Glycyl lysine isopeptide (Lys-Gly) (interchain with G-Cter in SUMO2); alternate cross-link involves residue lysine 18. A Phosphothreonine modification is found at threonine 29. Lysine 32 carries the post-translational modification N6-acetyllysine. Phosphoserine is present on serine 37. Lysine 38 is modified (N6-acetyllysine). Over residues 39-50 the composition is skewed to basic and acidic residues; it reads ETIEQEKQAGES. Phosphothreonine is present on threonine 40. At lysine 45 the chain carries N6-acetyllysine.

Belongs to the thymosin beta family. As to quaternary structure, identified in a complex composed of ACTA1, COBL, GSN AND TMSB4X. Interacts with SERPINB1. AcSDKP is inactivated by ACE, which removes the dipeptide Lys-Pro from its C-terminus. Originally found in thymus but it is widely distributed in many tissues.

It localises to the cytoplasm. It is found in the cytoskeleton. Its function is as follows. Plays an important role in the organization of the cytoskeleton. Binds to and sequesters actin monomers (G actin) and therefore inhibits actin polymerization. Potent inhibitor of bone marrow derived stem cell differentiation. Acts by inhibits the entry of hematopoietic pluripotent stem cells into the S-phase. This chain is Thymosin beta-4 (Tmsb4x), found in Mus musculus (Mouse).